The sequence spans 374 residues: Secondary metabolism regulator laeA (374 aa).

Residues 1 to 75 (MFEMGPVGTR…NRNGSPSMSP (75 aa)) are disordered. Polar residues predominate over residues 23–40 (SYHSPTSSDRGRSRQNSD). At Met207 the chain carries S-methylmethionine.

The protein belongs to the methyltransferase superfamily. LaeA methyltransferase family. As to quaternary structure, component of the heterotrimeric velvet complex composed of laeA, veA and velB; VeA acting as a bridging protein between laeA and velB. Self-methylates at Met-207.

Its subcellular location is the nucleus. The catalysed reaction is L-methionyl-[protein] + S-adenosyl-L-methionine = S-methyl-L-methionyl-[protein] + S-adenosyl-L-homocysteine. Methyltransferase that performs automethylation at Met-207. No other methyl-accepting substrate has been identified yet. Component of the velvet transcription factor complex that acts as a global regulator for secondary metabolite gene expression. Controls the expression of the sterigmatocystin, penicillin, and lovastatin gene clusters. Controls light-dependent formation of the velB-vosA complex, veA protein modification, and is required for light-mediated inhibition of sexual development. Within the velvet complex, controls light-dependent secondary metabolism. Involved in the defense response against Drosophila melanogaster larval grazing. The sequence is that of Secondary metabolism regulator laeA from Emericella nidulans (Aspergillus nidulans).